The sequence spans 296 residues: uncharacterized protein (296 aa).

The protein to Synechocystis PCC 6803 sll0787 and M.jannaschii MJ0640.

This is an uncharacterized protein from Methanocaldococcus jannaschii (strain ATCC 43067 / DSM 2661 / JAL-1 / JCM 10045 / NBRC 100440) (Methanococcus jannaschii).